The primary structure comprises 105 residues: Flower-specific defensin (105 aa).

An N-terminal signal peptide occupies residues 1–25; the sequence is MARSLCFMAFAILAMMLFVAYEVQA. 4 disulfide bridges follow: Cys-28–Cys-72, Cys-39–Cys-59, Cys-45–Cys-66, and Cys-49–Cys-68. Positions 73 to 105 are cleaved as a propeptide — removed in mature form; the sequence is VFDEKMTKTGAEILAEEAKTLAAALLEEEIMDN.

The protein belongs to the DEFL family. In terms of tissue distribution, most abundant in the epidermal cell layers of the petals and sepals, within the connective cells of the anthers, and the cortical cells of the style. Not detected in the tapetum, pollen mother cells, the transmitting tissue, the vascular bundles of the anther and style or in leaves. Expressed also in ovaries, but barley detectable in roots.

Its subcellular location is the secreted. It is found in the vacuole. Functionally, plant defense peptide with antifungal activity against F.oxysporum and B.cinerea. Retards the growth of the Lepidopteran insect pests H.armigera and H.punctigera. The protein is Flower-specific defensin (D1) of Nicotiana alata (Winged tobacco).